The sequence spans 98 residues: Flagellar hook-basal body complex protein FliE (98 aa).

The protein belongs to the FliE family.

It is found in the bacterial flagellum basal body. In Listeria monocytogenes serovar 1/2a (strain ATCC BAA-679 / EGD-e), this protein is Flagellar hook-basal body complex protein FliE.